A 228-amino-acid chain; its full sequence is Flavin-dependent thymidylate synthase (228 aa).

Positions 1–217 (MEYKILDKGF…PWTFEAFLKF (217 aa)) constitute a ThyX domain. FAD is bound by residues threonine 55, 78–80 (RHR), and glutamate 86. DUMP contacts are provided by residues 75–78 (QWFR), 86–90 (EASLR), and arginine 156. Residues 78–88 (RHRIGSFNEAS) carry the ThyX motif motif. FAD is bound by residues 172–174 (NAR) and asparagine 178. Arginine 183 lines the dUMP pocket. Arginine 183 (involved in ionization of N3 of dUMP, leading to its activation) is an active-site residue.

The protein belongs to the thymidylate synthase ThyX family. As to quaternary structure, homotetramer. FAD is required as a cofactor.

The enzyme catalyses dUMP + (6R)-5,10-methylene-5,6,7,8-tetrahydrofolate + NADPH + H(+) = dTMP + (6S)-5,6,7,8-tetrahydrofolate + NADP(+). Its pathway is pyrimidine metabolism; dTTP biosynthesis. Functionally, catalyzes the reductive methylation of 2'-deoxyuridine-5'-monophosphate (dUMP) to 2'-deoxythymidine-5'-monophosphate (dTMP) while utilizing 5,10-methylenetetrahydrofolate (mTHF) as the methyl donor, and NADPH and FADH(2) as the reductant. This Thermosipho africanus (strain TCF52B) protein is Flavin-dependent thymidylate synthase.